Consider the following 45-residue polypeptide: Proteinase inhibitor IIA (45 aa).

3 cysteine pairs are disulfide-bonded: Cys-10–Cys-24, Cys-14–Cys-35, and Cys-20–Cys-43.

Belongs to the protease inhibitor I20 (potato type II proteinase inhibitor) family.

It localises to the secreted. Inhibits trypsin strongly and chymotrypsin temporarily. This is Proteinase inhibitor IIA from Solanum tuberosum (Potato).